The primary structure comprises 298 residues: ATP synthase gamma chain (298 aa).

Belongs to the ATPase gamma chain family. As to quaternary structure, F-type ATPases have 2 components, CF(1) - the catalytic core - and CF(0) - the membrane proton channel. CF(1) has five subunits: alpha(3), beta(3), gamma(1), delta(1), epsilon(1). CF(0) has three main subunits: a, b and c.

Its subcellular location is the cell inner membrane. In terms of biological role, produces ATP from ADP in the presence of a proton gradient across the membrane. The gamma chain is believed to be important in regulating ATPase activity and the flow of protons through the CF(0) complex. The sequence is that of ATP synthase gamma chain from Francisella philomiragia subsp. philomiragia (strain ATCC 25017 / CCUG 19701 / FSC 153 / O#319-036).